Consider the following 624-residue polypeptide: Low affinity potassium transport system protein Kup (624 aa).

12 helical membrane-spanning segments follow: residues 9–29 (LPAI…TSPL), 49–69 (VFGF…IKYL), 103–123 (VIMG…TPAI), 137–157 (PQLD…LFMI), 165–185 (VGKL…GLGL), 213–233 (VSFI…ALYA), 247–267 (WFTV…ALLL), 276–296 (PFFL…AALA), 337–357 (IYIP…IVIV), 365–385 (LAAA…ILST), 398–418 (FVAL…TANL), and 421–441 (LLSG…VMTT).

Belongs to the HAK/KUP transporter (TC 2.A.72) family.

The protein resides in the cell inner membrane. It carries out the reaction K(+)(in) + H(+)(in) = K(+)(out) + H(+)(out). Its function is as follows. Responsible for the low-affinity transport of potassium into the cell. Likely operates as a K(+):H(+) symporter. This chain is Low affinity potassium transport system protein Kup, found in Shigella dysenteriae serotype 1 (strain Sd197).